Reading from the N-terminus, the 452-residue chain is tRNA modification GTPase MnmE (452 aa).

Residues Arg-24, Glu-81, and Arg-120 each contribute to the (6S)-5-formyl-5,6,7,8-tetrahydrofolate site. The TrmE-type G domain maps to 216 to 373; sequence GIKTVIVGAP…LFGAIGRWAD (158 aa). GTP contacts are provided by residues 226–231, 245–251, and 270–273; these read NVGKSS, SAEPGTT, and DTAG. The Mg(2+) site is built by Ser-230 and Thr-251. Lys-452 serves as a coordination point for (6S)-5-formyl-5,6,7,8-tetrahydrofolate.

This sequence belongs to the TRAFAC class TrmE-Era-EngA-EngB-Septin-like GTPase superfamily. TrmE GTPase family. As to quaternary structure, homodimer. Heterotetramer of two MnmE and two MnmG subunits. K(+) is required as a cofactor.

Its subcellular location is the cytoplasm. Exhibits a very high intrinsic GTPase hydrolysis rate. Involved in the addition of a carboxymethylaminomethyl (cmnm) group at the wobble position (U34) of certain tRNAs, forming tRNA-cmnm(5)s(2)U34. This Opitutus terrae (strain DSM 11246 / JCM 15787 / PB90-1) protein is tRNA modification GTPase MnmE.